Reading from the N-terminus, the 199-residue chain is Phosphoheptose isomerase (199 aa).

An SIS domain is found at 36–198 (MSQCLLNEHK…DRKLIPSSED (163 aa)). Position 51-53 (51-53 (NGG)) interacts with substrate. Zn(2+) is bound by residues His-60 and Glu-64. Substrate-binding positions include Glu-64, 93–94 (ND), 119–121 (STS), Ser-124, and Gln-174. Zn(2+)-binding residues include Gln-174 and His-182.

The protein belongs to the SIS family. GmhA subfamily. As to quaternary structure, homotetramer. The cofactor is Zn(2+).

Its subcellular location is the cytoplasm. The enzyme catalyses 2 D-sedoheptulose 7-phosphate = D-glycero-alpha-D-manno-heptose 7-phosphate + D-glycero-beta-D-manno-heptose 7-phosphate. It functions in the pathway carbohydrate biosynthesis; D-glycero-D-manno-heptose 7-phosphate biosynthesis; D-glycero-alpha-D-manno-heptose 7-phosphate and D-glycero-beta-D-manno-heptose 7-phosphate from sedoheptulose 7-phosphate: step 1/1. In terms of biological role, catalyzes the isomerization of sedoheptulose 7-phosphate in D-glycero-D-manno-heptose 7-phosphate. The polypeptide is Phosphoheptose isomerase (Coxiella burnetii (strain RSA 331 / Henzerling II)).